The sequence spans 105 residues: Cell division protein FtsB (105 aa).

Topologically, residues 1 to 3 (MGK) are cytoplasmic. A helical transmembrane segment spans residues 4–21 (LTLLLLVLLGWLQYSLWL). At 22–105 (GKNGVHDLVR…PAAPATQDNQ (84 aa)) the chain is on the periplasmic side. Residues 28–62 (DLVRVESDVAAQQSNNAQLKARNDQLFAEIDDLNG) adopt a coiled-coil conformation.

This sequence belongs to the FtsB family. As to quaternary structure, part of a complex composed of FtsB, FtsL and FtsQ.

The protein localises to the cell inner membrane. Essential cell division protein. May link together the upstream cell division proteins, which are predominantly cytoplasmic, with the downstream cell division proteins, which are predominantly periplasmic. The polypeptide is Cell division protein FtsB (Sodalis glossinidius (strain morsitans)).